The chain runs to 507 residues: AMSH-like ubiquitin thioesterase 1 (507 aa).

The MPN domain occupies 333–463; it reads LHIATSMMDT…IFRLTTPGGM (131 aa). Zn(2+)-binding residues include histidine 411, histidine 413, aspartate 424, histidine 426, cysteine 469, histidine 475, and histidine 477. The short motif at 411 to 424 is the JAMM motif element; sequence HTHPTQSCFMSSID.

It belongs to the peptidase M67C family. Requires Zn(2+) as cofactor.

Its subcellular location is the membrane. The protein localises to the cytoplasm. Zinc metalloprotease that cleaves 'Lys-48'- and 'Lys-63'-linked polyubiquitin chains. This chain is AMSH-like ubiquitin thioesterase 1 (AMSH1), found in Arabidopsis thaliana (Mouse-ear cress).